The sequence spans 68 residues: uncharacterized protein (68 aa).

The N-terminal stretch at 1 to 15 (MTIIFLICLDASTQS) is a signal peptide. The disordered stretch occupies residues 14 to 68 (QSTTNNSINNNNNNNNNNNNNNNNNNNNNNNNNNNNNNNNNNNNNNSKVFDFNIF). N-linked (GlcNAc...) asparagine glycosylation is found at N18 and N58. A compositionally biased stretch (low complexity) spans 22–59 (NNNNNNNNNNNNNNNNNNNNNNNNNNNNNNNNNNNNNN).

The protein resides in the secreted. This is an uncharacterized protein from Dictyostelium discoideum (Social amoeba).